The following is a 304-amino-acid chain: Probable 5-dehydro-4-deoxyglucarate dehydratase (304 aa).

It belongs to the DapA family.

It carries out the reaction 5-dehydro-4-deoxy-D-glucarate + H(+) = 2,5-dioxopentanoate + CO2 + H2O. Its pathway is carbohydrate acid metabolism; D-glucarate degradation; 2,5-dioxopentanoate from D-glucarate: step 2/2. The sequence is that of Probable 5-dehydro-4-deoxyglucarate dehydratase from Methylobacterium radiotolerans (strain ATCC 27329 / DSM 1819 / JCM 2831 / NBRC 15690 / NCIMB 10815 / 0-1).